A 248-amino-acid chain; its full sequence is Putative insertion sequence ATP-binding protein y4uH (248 aa).

106 to 113 provides a ligand contact to ATP; that stretch reads GPTGIGKS.

The protein belongs to the IS21/IS1162 putative ATP-binding protein family.

The protein is Putative insertion sequence ATP-binding protein y4uH of Sinorhizobium fredii (strain NBRC 101917 / NGR234).